Consider the following 198-residue polypeptide: MISQDKNYSDDQISQDSEIDTIEAVSETEAVSETNEIIDMRDDRIQKLEVELVQAQQRERDLLLRSKAEIENMRRRNEIEVEKVYKFSLERFVSELLPVIDNLERALEMSDKSSQNLASTIEGIELTLKSLLNVVQKFGIKVVSETHVPFNPDIHQAMTILESEEHEPNHVIIVMQKGYLLNGRLIRPAMVTVSKTKS.

Belongs to the GrpE family. Homodimer.

The protein resides in the cytoplasm. Functionally, participates actively in the response to hyperosmotic and heat shock by preventing the aggregation of stress-denatured proteins, in association with DnaK and GrpE. It is the nucleotide exchange factor for DnaK and may function as a thermosensor. Unfolded proteins bind initially to DnaJ; upon interaction with the DnaJ-bound protein, DnaK hydrolyzes its bound ATP, resulting in the formation of a stable complex. GrpE releases ADP from DnaK; ATP binding to DnaK triggers the release of the substrate protein, thus completing the reaction cycle. Several rounds of ATP-dependent interactions between DnaJ, DnaK and GrpE are required for fully efficient folding. The sequence is that of Protein GrpE from Baumannia cicadellinicola subsp. Homalodisca coagulata.